Here is a 100-residue protein sequence, read N- to C-terminus: Urease subunit gamma (100 aa).

This sequence belongs to the urease gamma subunit family. As to quaternary structure, heterotrimer of UreA (gamma), UreB (beta) and UreC (alpha) subunits. Three heterotrimers associate to form the active enzyme.

The protein localises to the cytoplasm. The enzyme catalyses urea + 2 H2O + H(+) = hydrogencarbonate + 2 NH4(+). The protein operates within nitrogen metabolism; urea degradation; CO(2) and NH(3) from urea (urease route): step 1/1. This is Urease subunit gamma from Mycobacterium bovis (strain ATCC BAA-935 / AF2122/97).